Reading from the N-terminus, the 132-residue chain is Small ribosomal subunit protein uS8c (132 aa).

Belongs to the universal ribosomal protein uS8 family. Part of the 30S ribosomal subunit.

It is found in the plastid. The protein resides in the chloroplast. In terms of biological role, one of the primary rRNA binding proteins, it binds directly to 16S rRNA central domain where it helps coordinate assembly of the platform of the 30S subunit. This chain is Small ribosomal subunit protein uS8c (rps8), found in Chaetosphaeridium globosum (Charophycean green alga).